A 276-amino-acid chain; its full sequence is 3beta-hydroxysteroid dehydrogenase (276 aa).

NADP(+) contacts are provided by residues 70 to 71, Asn-97, Tyr-162, and Lys-166; that span reads DV. Catalysis depends on Tyr-162, which acts as the Proton acceptor.

Belongs to the short-chain dehydrogenases/reductases (SDR) family.

It catalyses the reaction 3-oxo-5beta-cholan-24-oate + NADPH + H(+) = isolithocholate + NADP(+). The enzyme catalyses 12alpha-hydroxy-3-oxo-5beta-cholan-24-oate + NADPH + H(+) = isodeoxycholate + NADP(+). It carries out the reaction 12alpha-hydroxy-3-oxo-5beta-cholan-24-oate + NADH + H(+) = isodeoxycholate + NAD(+). The catalysed reaction is 7alpha,12alpha-dihydroxy-3-oxo-5beta-cholan-24-oate + NADPH + H(+) = isocholate + NADP(+). It catalyses the reaction 3-oxochenodeoxycholate + NADPH + H(+) = isochenodeoxycholate + NADP(+). Functionally, involved in the modification of secondary bile acids into iso-bile acids (3beta-bile acids) via epimerization of the 3-OH group through a 3-oxo-intermediate. Catalyzes the reduction of 12-alpha-hydroxy-3-oxo-5-beta-cholan-24-oate (3-oxo-DCA) and 3-oxo-5-beta-cholan-24-oate (3-oxo-LCA) to yield isodeoxycholate (isoDCA) and isolithocholate (isoLCA), respectively. Is also able to catalyze the reduction of 3-dehydrocholate (3-oxo-CA or 7alpha,12alpha-dihydroxy-3-oxo-5beta-cholan-24-oate) and 7-alpha-hydroxy-3-oxo-5-beta-cholan-24-oate (3-oxo-CDCA), into isocholate (isoCA) and isochenodeoxycholate (isoCDCA), respectively. Accepts both NADPH and NADH as cosubstrates. The conversion of the abundant bile acid deoxycholate (DCA) into isoDCA by the gut bacterium R.gnavus favors the growth of the keystone commensal genus Bacteroides, since isoDCA is less cytotoxic than its parent compound, DCA; iso-bile acids have thus a potential role in modulating gut community composition. This is 3beta-hydroxysteroid dehydrogenase from Mediterraneibacter gnavus (strain ATCC 29149 / DSM 114966 / JCM 6515 / VPI C7-9) (Ruminococcus gnavus).